The sequence spans 271 residues: Ribosomal RNA small subunit methyltransferase A (271 aa).

Residues His14, Leu16, Gly41, Glu63, Asp89, and Asn107 each coordinate S-adenosyl-L-methionine.

The protein belongs to the class I-like SAM-binding methyltransferase superfamily. rRNA adenine N(6)-methyltransferase family. RsmA subfamily.

The protein localises to the cytoplasm. The enzyme catalyses adenosine(1518)/adenosine(1519) in 16S rRNA + 4 S-adenosyl-L-methionine = N(6)-dimethyladenosine(1518)/N(6)-dimethyladenosine(1519) in 16S rRNA + 4 S-adenosyl-L-homocysteine + 4 H(+). Functionally, specifically dimethylates two adjacent adenosines (A1518 and A1519) in the loop of a conserved hairpin near the 3'-end of 16S rRNA in the 30S particle. May play a critical role in biogenesis of 30S subunits. This Lawsonia intracellularis (strain PHE/MN1-00) protein is Ribosomal RNA small subunit methyltransferase A.